The sequence spans 238 residues: Ribonuclease PH (238 aa).

Phosphate is bound by residues Arg86 and 124–126; that span reads GTR.

Belongs to the RNase PH family. Homohexameric ring arranged as a trimer of dimers.

It catalyses the reaction tRNA(n+1) + phosphate = tRNA(n) + a ribonucleoside 5'-diphosphate. In terms of biological role, phosphorolytic 3'-5' exoribonuclease that plays an important role in tRNA 3'-end maturation. Removes nucleotide residues following the 3'-CCA terminus of tRNAs; can also add nucleotides to the ends of RNA molecules by using nucleoside diphosphates as substrates, but this may not be physiologically important. Probably plays a role in initiation of 16S rRNA degradation (leading to ribosome degradation) during starvation. This is Ribonuclease PH from Sphingopyxis alaskensis (strain DSM 13593 / LMG 18877 / RB2256) (Sphingomonas alaskensis).